The following is a 68-amino-acid chain: Small ribosomal subunit protein bS21 (68 aa).

It belongs to the bacterial ribosomal protein bS21 family.

This Jannaschia sp. (strain CCS1) protein is Small ribosomal subunit protein bS21.